The primary structure comprises 181 residues: Adenine phosphoribosyltransferase (181 aa).

The protein belongs to the purine/pyrimidine phosphoribosyltransferase family. Homodimer.

The protein localises to the cytoplasm. It carries out the reaction AMP + diphosphate = 5-phospho-alpha-D-ribose 1-diphosphate + adenine. The protein operates within purine metabolism; AMP biosynthesis via salvage pathway; AMP from adenine: step 1/1. Catalyzes a salvage reaction resulting in the formation of AMP, that is energically less costly than de novo synthesis. This Colwellia psychrerythraea (strain 34H / ATCC BAA-681) (Vibrio psychroerythus) protein is Adenine phosphoribosyltransferase.